The following is a 295-amino-acid chain: Small ribosomal subunit biogenesis GTPase RsgA (295 aa).

A CP-type G domain is found at 68–228 (KNLLTKPHVA…VVDTPGFANL (161 aa)). Residues 117–120 (NKMD) and 170–178 (GLSGVGKSS) contribute to the GTP site. Zn(2+) contacts are provided by Cys-250, Cys-255, His-257, and Cys-263.

This sequence belongs to the TRAFAC class YlqF/YawG GTPase family. RsgA subfamily. As to quaternary structure, monomer. Associates with 30S ribosomal subunit, binds 16S rRNA. The cofactor is Zn(2+).

It localises to the cytoplasm. Functionally, one of several proteins that assist in the late maturation steps of the functional core of the 30S ribosomal subunit. Helps release RbfA from mature subunits. May play a role in the assembly of ribosomal proteins into the subunit. Circularly permuted GTPase that catalyzes slow GTP hydrolysis, GTPase activity is stimulated by the 30S ribosomal subunit. The chain is Small ribosomal subunit biogenesis GTPase RsgA from Thermotoga petrophila (strain ATCC BAA-488 / DSM 13995 / JCM 10881 / RKU-1).